A 237-amino-acid polypeptide reads, in one-letter code: Phosphoribosylaminoimidazole-succinocarboxamide synthase (237 aa).

It belongs to the SAICAR synthetase family.

It catalyses the reaction 5-amino-1-(5-phospho-D-ribosyl)imidazole-4-carboxylate + L-aspartate + ATP = (2S)-2-[5-amino-1-(5-phospho-beta-D-ribosyl)imidazole-4-carboxamido]succinate + ADP + phosphate + 2 H(+). Its pathway is purine metabolism; IMP biosynthesis via de novo pathway; 5-amino-1-(5-phospho-D-ribosyl)imidazole-4-carboxamide from 5-amino-1-(5-phospho-D-ribosyl)imidazole-4-carboxylate: step 1/2. The protein is Phosphoribosylaminoimidazole-succinocarboxamide synthase of Marinobacter nauticus (strain ATCC 700491 / DSM 11845 / VT8) (Marinobacter aquaeolei).